Consider the following 274-residue polypeptide: DNA-directed RNA polymerase subunit Rpo3 (274 aa).

[3Fe-4S] cluster is bound by residues C202, C205, and C208.

It belongs to the archaeal Rpo3/eukaryotic RPB3 RNA polymerase subunit family. Part of the RNA polymerase complex. The cofactor is [3Fe-4S] cluster.

The protein resides in the cytoplasm. It carries out the reaction RNA(n) + a ribonucleoside 5'-triphosphate = RNA(n+1) + diphosphate. Its function is as follows. DNA-dependent RNA polymerase (RNAP) catalyzes the transcription of DNA into RNA using the four ribonucleoside triphosphates as substrates. The sequence is that of DNA-directed RNA polymerase subunit Rpo3 from Methanobrevibacter smithii (strain ATCC 35061 / DSM 861 / OCM 144 / PS).